The sequence spans 130 residues: Small ribosomal subunit protein eS8 (130 aa).

The protein belongs to the eukaryotic ribosomal protein eS8 family. In terms of assembly, part of the 30S ribosomal subunit.

The polypeptide is Small ribosomal subunit protein eS8 (Thermococcus gammatolerans (strain DSM 15229 / JCM 11827 / EJ3)).